The following is a 211-amino-acid chain: Beta-crystallin B3 (211 aa).

The residue at position 1 (methionine 1) is an N-acetylmethionine. The residue at position 2 (alanine 2) is an N-acetylalanine; in Beta-crystallin B3, N-terminally processed. An N-terminal arm region spans residues 2–23 (AEQHGAPEQAAASKSHGGLGGS). 2 consecutive Beta/gamma crystallin 'Greek key' domains span residues 24-63 (YKVT…QVES) and 64-108 (GPWL…RPLH). The segment at 109–113 (IDGPD) is connecting peptide. Beta/gamma crystallin 'Greek key' domains follow at residues 114–155 (HKLH…RVIN) and 156–198 (GTWV…RRIR). A C-terminal arm region spans residues 200–211 (QKWHKRGCFLSS).

Belongs to the beta/gamma-crystallin family. In terms of assembly, homo/heterodimer, or complexes of higher-order. The structure of beta-crystallin oligomers seems to be stabilized through interactions between the N-terminal arms.

Its function is as follows. Crystallins are the dominant structural components of the vertebrate eye lens. The protein is Beta-crystallin B3 (Crybb3) of Rattus norvegicus (Rat).